A 171-amino-acid chain; its full sequence is MAAAGSSSRFAVTCGLLSQYMRERQQPQPPVTVLEAVAEEEEEEDARTMQLFPPRAAAADGVATPSAGTAPLTIFYDGRMVVVDDVPAEKAAELMRLAGSACSPPQPAHAAALPEMPIARKASLQRFLQKRKHRITTTSEPYKKAAVASPAPEKSFAVAPVKDEPATWLGL.

One can recognise a Tify domain in the interval 65 to 100 (PSAGTAPLTIFYDGRMVVVDDVPAEKAAELMRLAGS). The short motif at 117–142 (PIARKASLQRFLQKRKHRITTTSEPY) is the Jas element. Residues 119–126 (ARKASLQR) carry the Nuclear localization signal motif.

It belongs to the TIFY/JAZ family. In terms of assembly, interacts with BHLH148 and COI1A. Interacts with COI1A, COI1B and COI2 in a coronatine-dependent manner. Coronatine is an analog of jasmonoyl isoleucine (JA-Ile). In terms of processing, ubiquitinated. Increase in jasmonoyl isoleucine (JA-Ile) levels mediates its degradation via COI1A-mediated proteasome pathway.

The protein resides in the nucleus. Functionally, repressor of jasmonate (JA) responses. May act on an initial response of JA-regulated gene expression toward drought tolerance as part of a BHLH148-TIFY11D/JAZ12-COI1A complex. The protein is Protein TIFY 11d of Oryza sativa subsp. indica (Rice).